Consider the following 222-residue polypeptide: Putative adhesin RP828 (222 aa).

The N-terminal stretch at 1 to 22 (MKKLLLIATASATILSSSVSFA) is a signal peptide.

Adheres to biotinylated epithelial (Vero cell) proteins. The protein is Putative adhesin RP828 of Rickettsia prowazekii (strain Madrid E).